Here is a 490-residue protein sequence, read N- to C-terminus: Protein LMBR1L (490 aa).

Residues 1–21 (MEAPDYEVLSVREQLFHERIR) are Extracellular-facing. Residues 1–59 (MEAPDYEVLSVREQLFHERIRECIISTLLFATLYILCHIFLTRFKKPAEFTTVDDEDAT) are interaction with LGB. Residues 1 to 76 (MEAPDYEVLS…LCTFTLAIAL (76 aa)) form an LCN1-binding region. Residues 22 to 42 (ECIISTLLFATLYILCHIFLT) traverse the membrane as a helical segment. The Cytoplasmic segment spans residues 43–66 (RFKKPAEFTTVDDEDATVNKIALE). The helical transmembrane segment at 67-87 (LCTFTLAIALGAVLLLPFSII) threads the bilayer. Residues 88 to 114 (SNEVLLSLPRNYYIQWLNGSLIHGLWN) are Extracellular-facing. The helical transmembrane segment at 115–135 (LVFLFSNLSLIFLMPFAYFFT) threads the bilayer. The Cytoplasmic portion of the chain corresponds to 136–154 (ESEGFAGSRRGVLGRVYET). The chain crosses the membrane as a helical span at residues 155 to 175 (VVMLMLLTLLVLGMVWVASAI). The Extracellular portion of the chain corresponds to 176-196 (LDNNKASRESLYDFWEYYLPY). A helical membrane pass occupies residues 197 to 217 (LYSCISFLGVLLLLVCTPLGL). The Cytoplasmic portion of the chain corresponds to 218–305 (ARMFSVTGKL…NLGYPLAMLC (88 aa)). A helical transmembrane segment spans residues 306–326 (LLVLTGLSVLIVAIHILELLI). At 327-350 (DEAAMPRGMQDASLGQVSFSRLGS) the chain is on the extracellular side. Residues 351 to 371 (FGAVIQVALIFYLMVSSVVGF) traverse the membrane as a helical segment. At 372–388 (YSSPLFRSLRPRWHDTA) the chain is on the cytoplasmic side. A helical membrane pass occupies residues 389 to 409 (MTQIIGNCVCLLVLSSALPVF). At 410–431 (SRTLGLTRFDLLGDFGRFNWLG) the chain is on the extracellular side. Residues 432 to 452 (NFYIVFLYNAAFAGLTTLCLV) form a helical membrane-spanning segment. Residues 453 to 490 (KTFTAAVRAELIRAFGLDRLPLPVSGFPPRASRKTQHQ) lie on the Cytoplasmic side of the membrane.

The protein belongs to the LIMR family. As to quaternary structure, dimer. Can also form higher oligomers. Interacts with LCN1; this interaction mediates the endocytosis of LCN1. Interacts with UBAC2, FAF2, VCP, AMFR, ZNRF3, CTNNB1, LRP6, GSK3A, GSK3B, FZD6, DVL2 and RNF43. Interaction with LGB and SCGB1A1 is controversial.

The protein resides in the cell membrane. It localises to the endoplasmic reticulum membrane. In terms of biological role, plays an essential role in lymphocyte development by negatively regulating the canonical Wnt signaling pathway. In association with UBAC2 and E3 ubiquitin-protein ligase AMFR, promotes the ubiquitin-mediated degradation of CTNNB1 and Wnt receptors FZD6 and LRP6. LMBR1L stabilizes the beta-catenin destruction complex that is required for regulating CTNNB1 levels. Acts as a LCN1 receptor and can mediate its endocytosis. This is Protein LMBR1L (LMBR1L) from Pongo abelii (Sumatran orangutan).